Here is a 156-residue protein sequence, read N- to C-terminus: ATP synthase subunit b (156 aa).

A helical membrane pass occupies residues 5–25 (LTLIGQAIAFAFFVAFCMKFV).

The protein belongs to the ATPase B chain family. In terms of assembly, F-type ATPases have 2 components, F(1) - the catalytic core - and F(0) - the membrane proton channel. F(1) has five subunits: alpha(3), beta(3), gamma(1), delta(1), epsilon(1). F(0) has three main subunits: a(1), b(2) and c(10-14). The alpha and beta chains form an alternating ring which encloses part of the gamma chain. F(1) is attached to F(0) by a central stalk formed by the gamma and epsilon chains, while a peripheral stalk is formed by the delta and b chains.

The protein resides in the cell inner membrane. F(1)F(0) ATP synthase produces ATP from ADP in the presence of a proton or sodium gradient. F-type ATPases consist of two structural domains, F(1) containing the extramembraneous catalytic core and F(0) containing the membrane proton channel, linked together by a central stalk and a peripheral stalk. During catalysis, ATP synthesis in the catalytic domain of F(1) is coupled via a rotary mechanism of the central stalk subunits to proton translocation. Its function is as follows. Component of the F(0) channel, it forms part of the peripheral stalk, linking F(1) to F(0). The protein is ATP synthase subunit b of Acinetobacter baumannii (strain SDF).